The following is a 189-amino-acid chain: Ribonuclease M5 (189 aa).

Positions 8 to 91 (KEIIVVEGKD…AFLPKEEALA (84 aa)) constitute a Toprim domain. E14, D60, and D62 together coordinate Mg(2+).

The protein belongs to the ribonuclease M5 family. Requires Mg(2+) as cofactor.

The protein resides in the cytoplasm. The enzyme catalyses Endonucleolytic cleavage of RNA, removing 21 and 42 nucleotides, respectively, from the 5'- and 3'-termini of a 5S-rRNA precursor.. Functionally, required for correct processing of both the 5' and 3' ends of 5S rRNA precursor. Cleaves both sides of a double-stranded region yielding mature 5S rRNA in one step. The protein is Ribonuclease M5 of Bacillus cereus (strain ATCC 14579 / DSM 31 / CCUG 7414 / JCM 2152 / NBRC 15305 / NCIMB 9373 / NCTC 2599 / NRRL B-3711).